A 129-amino-acid polypeptide reads, in one-letter code: Ribonuclease VapC12 (129 aa).

Mg(2+) contacts are provided by aspartate 5 and aspartate 94.

It belongs to the PINc/VapC protein family. Mg(2+) serves as cofactor.

Toxic component of a type II toxin-antitoxin (TA) system. An RNase. The cognate antitoxin is VapB12. This is Ribonuclease VapC12 from Mycobacterium tuberculosis (strain CDC 1551 / Oshkosh).